The chain runs to 181 residues: Histone H1 (181 aa).

Disordered regions lie at residues 1–23 (MTETTSAKPKKVSKPKAKPTHPP) and 81–181 (TKGA…PKKK). The segment covering 8-19 (KPKKVSKPKAKP) has biased composition (basic residues). An H15 domain is found at 20–94 (THPPTSVMVM…GASGSFKLAA (75 aa)). Basic residues-rich tracts occupy residues 103–119 (AVAKPKKAKTPKKKAAA) and 145–181 (KPKKAKTPKKKAAPAKKTPVKKVKKTSPKKKAAPKKK).

Belongs to the histone H1/H5 family.

It is found in the nucleus. The protein resides in the chromosome. Functionally, histones H1 are necessary for the condensation of nucleosome chains into higher-order structures. This Tigriopus californicus (Marine copepod) protein is Histone H1.